Consider the following 581-residue polypeptide: Threonine--tRNA ligase (581 aa).

Residues 185–478 (DHRKLGKELD…LVEHYGGAFP (294 aa)) form a catalytic region. Cysteine 278, histidine 329, and histidine 455 together coordinate Zn(2+).

This sequence belongs to the class-II aminoacyl-tRNA synthetase family. Homodimer. The cofactor is Zn(2+).

It localises to the cytoplasm. The enzyme catalyses tRNA(Thr) + L-threonine + ATP = L-threonyl-tRNA(Thr) + AMP + diphosphate + H(+). Its function is as follows. Catalyzes the attachment of threonine to tRNA(Thr) in a two-step reaction: L-threonine is first activated by ATP to form Thr-AMP and then transferred to the acceptor end of tRNA(Thr). Also edits incorrectly charged L-seryl-tRNA(Thr). This chain is Threonine--tRNA ligase, found in Borreliella burgdorferi (strain ATCC 35210 / DSM 4680 / CIP 102532 / B31) (Borrelia burgdorferi).